The following is a 123-amino-acid chain: Large ribosomal subunit protein uL14c (123 aa).

It belongs to the universal ribosomal protein uL14 family. As to quaternary structure, part of the 50S ribosomal subunit.

Its subcellular location is the plastid. The protein localises to the chloroplast. In terms of biological role, binds to 23S rRNA. The sequence is that of Large ribosomal subunit protein uL14c from Sorghum bicolor (Sorghum).